A 1222-amino-acid chain; its full sequence is A disintegrin and metalloproteinase with thrombospondin motifs 16 (1222 aa).

A signal peptide spans 1–20 (MESRGCAALWVLLLAQVSEQ). Positions 21–277 (QTPACALGLA…EYKPSSRHKR (257 aa)) are excised as a propeptide. 2 N-linked (GlcNAc...) asparagine glycosylation sites follow: asparagine 154 and asparagine 190. Residues 245 to 253 (HFCGRRKKY) carry the Cysteine switch motif. Cysteine 247 contributes to the Zn(2+) binding site. Residues 288 to 493 (LNVETLVVVD…AQAICLADQP (206 aa)) enclose the Peptidase M12B domain. Asparagine 308 carries an N-linked (GlcNAc...) asparagine glycan. 11 cysteine pairs are disulfide-bonded: cysteine 364-cysteine 415, cysteine 390-cysteine 397, cysteine 409-cysteine 488, cysteine 448-cysteine 472, cysteine 516-cysteine 541, cysteine 527-cysteine 548, cysteine 536-cysteine 567, cysteine 561-cysteine 572, cysteine 596-cysteine 633, cysteine 600-cysteine 638, and cysteine 611-cysteine 623. Residue histidine 431 participates in Zn(2+) binding. Glutamate 432 is a catalytic residue. Zn(2+) is bound by residues histidine 435 and histidine 441. One can recognise a Disintegrin domain in the interval 494–583 (KPVKEYKYPE…KYGDEGPKPT (90 aa)). Residues 584 to 639 (HGHWSDWSPWSPCSRTCGGGISHRDRLCTNPRPSHGGKFCQGSTRTLKLCNSQRCP) form the TSP type-1 1 domain. 6 N-linked (GlcNAc...) asparagine glycosylation sites follow: asparagine 739, asparagine 778, asparagine 825, asparagine 833, asparagine 903, and asparagine 933. Residues 745–871 (THRGLYSKHH…KTPAAQPSYS (127 aa)) form a spacer region. TSP type-1 domains follow at residues 872-920 (WAIV…LVPC), 925-985 (CPSS…QSCP), 986-1046 (PAWS…KRCH), 1049-1113 (KKLQ…IPCP), and 1125-1179 (RGSW…HFCP). Positions 1184 to 1221 (RGTFCKDLFHWCYLVPQHGMCGHRFYSKQCCNTCSKSN) constitute a PLAC domain.

Zn(2+) is required as a cofactor. Post-translationally, the precursor is cleaved by a furin endopeptidase. In terms of processing, glycosylated. Can be O-fucosylated by POFUT2 on a serine or a threonine residue found within the consensus sequence C1-X(2)-(S/T)-C2-G of the TSP type-1 repeat domains where C1 and C2 are the first and second cysteine residue of the repeat, respectively. Fucosylated repeats can then be further glycosylated by the addition of a beta-1,3-glucose residue by the glucosyltransferase, B3GALTL. Fucosylation mediates the efficient secretion of ADAMTS family members. Can also be C-glycosylated with one or two mannose molecules on tryptophan residues within the consensus sequence W-X-X-W of the TPRs, and N-glycosylated. These other glycosylations can also facilitate secretion.

It localises to the secreted. The protein localises to the extracellular space. The protein resides in the extracellular matrix. The chain is A disintegrin and metalloproteinase with thrombospondin motifs 16 (Adamts16) from Mus musculus (Mouse).